We begin with the raw amino-acid sequence, 379 residues long: UDP-N-acetylglucosamine--N-acetylmuramyl-(pentapeptide) pyrophosphoryl-undecaprenol N-acetylglucosamine transferase (379 aa).

UDP-N-acetyl-alpha-D-glucosamine-binding positions include 13 to 15 (TGG), Asn-123, Arg-166, Ser-194, and Gln-295.

Belongs to the glycosyltransferase 28 family. MurG subfamily.

Its subcellular location is the cell inner membrane. It carries out the reaction di-trans,octa-cis-undecaprenyl diphospho-N-acetyl-alpha-D-muramoyl-L-alanyl-D-glutamyl-meso-2,6-diaminopimeloyl-D-alanyl-D-alanine + UDP-N-acetyl-alpha-D-glucosamine = di-trans,octa-cis-undecaprenyl diphospho-[N-acetyl-alpha-D-glucosaminyl-(1-&gt;4)]-N-acetyl-alpha-D-muramoyl-L-alanyl-D-glutamyl-meso-2,6-diaminopimeloyl-D-alanyl-D-alanine + UDP + H(+). It functions in the pathway cell wall biogenesis; peptidoglycan biosynthesis. Its function is as follows. Cell wall formation. Catalyzes the transfer of a GlcNAc subunit on undecaprenyl-pyrophosphoryl-MurNAc-pentapeptide (lipid intermediate I) to form undecaprenyl-pyrophosphoryl-MurNAc-(pentapeptide)GlcNAc (lipid intermediate II). The polypeptide is UDP-N-acetylglucosamine--N-acetylmuramyl-(pentapeptide) pyrophosphoryl-undecaprenol N-acetylglucosamine transferase (Rhodospirillum centenum (strain ATCC 51521 / SW)).